The chain runs to 615 residues: DNA mismatch repair protein MutL (615 aa).

Positions 363–397 (FAEPAVREPVAPRYTPAPASGSRPAAPWPNAQPGY) are disordered. Low complexity predominate over residues 378-391 (PAPASGSRPAAPWP).

It belongs to the DNA mismatch repair MutL/HexB family.

In terms of biological role, this protein is involved in the repair of mismatches in DNA. It is required for dam-dependent methyl-directed DNA mismatch repair. May act as a 'molecular matchmaker', a protein that promotes the formation of a stable complex between two or more DNA-binding proteins in an ATP-dependent manner without itself being part of a final effector complex. The protein is DNA mismatch repair protein MutL of Escherichia coli O157:H7.